We begin with the raw amino-acid sequence, 55 residues long: Large ribosomal subunit protein bL33 (55 aa).

This sequence belongs to the bacterial ribosomal protein bL33 family.

This Orientia tsutsugamushi (strain Boryong) (Rickettsia tsutsugamushi) protein is Large ribosomal subunit protein bL33.